A 364-amino-acid chain; its full sequence is Autophagy-related protein 5 (364 aa).

The span at 1–13 (MASPNPYSYSPQL) shows a compositional bias: polar residues. Residues 1 to 103 (MASPNPYSYS…SLPPKPKPSS (103 aa)) form a disordered region. Over residues 28-42 (SSPSFRSTPFRSSRG) the composition is skewed to low complexity. Residues 43–53 (TGAGTGIGLGL) are compositionally biased toward gly residues. Residues 72–82 (RSGDGSHDDLP) show a composition bias toward basic and acidic residues. A Glycyl lysine isopeptide (Lys-Gly) (interchain with G-Cter in ATG12) cross-link involves residue Lys202. The disordered stretch occupies residues 262–306 (PSSPSPPSSDQQQPQRPGGSSSSGSYRVMQTLVPPRGPNNRTPQT). Low complexity predominate over residues 269 to 286 (SSDQQQPQRPGGSSSSGS).

Belongs to the ATG5 family. As to quaternary structure, conjugated with atg12. Post-translationally, conjugated to atg12; which is essential for autophagy.

It localises to the preautophagosomal structure membrane. Involved in cytoplasm to vacuole transport (Cvt) and autophagic vesicle formation. Autophagy is essential for maintenance of amino acid levels and protein synthesis under nitrogen starvation. Required for selective autophagic degradation of the nucleus (nucleophagy). Also required for mitophagy, which eliminates defective or superfluous mitochondria in order to fulfill cellular energy requirements and prevent excess ROS production. Conjugation with atg12, through a ubiquitin-like conjugating system involving apg-5/atg7 as an E1-like activating enzyme and atg10 as an E2-like conjugating enzyme, is essential for its function. The atg12-apg-4/atg5 conjugate acts as an E3-like enzyme which is required for lipidation of apg-6/atg8 and apg-6/atg8 association to the vesicle membranes. The protein is Autophagy-related protein 5 (apg-4) of Neurospora crassa (strain ATCC 24698 / 74-OR23-1A / CBS 708.71 / DSM 1257 / FGSC 987).